We begin with the raw amino-acid sequence, 362 residues long: S-adenosylmethionine decarboxylase proenzyme (362 aa).

Catalysis depends on residues Glu11 and Glu14. The Schiff-base intermediate with substrate; via pyruvic acid role is filled by Ser71. Position 71 is a pyruvic acid (Ser); by autocatalysis (Ser71). Cys85 (proton donor; for catalytic activity) is an active-site residue. Active-site proton acceptor; for processing activity residues include Ser234 and His247.

It belongs to the eukaryotic AdoMetDC family. It depends on pyruvate as a cofactor. Post-translationally, is synthesized initially as an inactive proenzyme. Formation of the active enzyme involves a self-maturation process in which the active site pyruvoyl group is generated from an internal serine residue via an autocatalytic post-translational modification. Two non-identical subunits are generated from the proenzyme in this reaction, and the pyruvate is formed at the N-terminus of the alpha chain, which is derived from the carboxyl end of the proenzyme. The post-translation cleavage follows an unusual pathway, termed non-hydrolytic serinolysis, in which the side chain hydroxyl group of the serine supplies its oxygen atom to form the C-terminus of the beta chain, while the remainder of the serine residue undergoes an oxidative deamination to produce ammonia and the pyruvoyl group blocking the N-terminus of the alpha chain.

It carries out the reaction S-adenosyl-L-methionine + H(+) = S-adenosyl 3-(methylsulfanyl)propylamine + CO2. The protein operates within amine and polyamine biosynthesis; S-adenosylmethioninamine biosynthesis; S-adenosylmethioninamine from S-adenosyl-L-methionine: step 1/1. This chain is S-adenosylmethionine decarboxylase proenzyme (SAMDC), found in Ipomoea batatas (Sweet potato).